The following is a 209-amino-acid chain: MPDFSIENEISKLINNKHCTIVGVDEVGYGSLAGPVVSAAVFFPKHDNHITYNIQDSKKLTPKKRLEIYNIITPMVKWSIGLAEVHEIDQYNILNATHIAMQRALRGLNSNIDYVIVDGNKVPELPWNAKAVVDGDNISISIAAASIIAKVTRDKLMETLHIQFPQYNWNKNKGYGTKHHLESLHKYGKTIHHRNTFAPASGITKLYNK.

Residues 19 to 209 (CTIVGVDEVG…ASGITKLYNK (191 aa)) enclose the RNase H type-2 domain. 3 residues coordinate a divalent metal cation: Asp25, Glu26, and Asp118.

It belongs to the RNase HII family. Mn(2+) serves as cofactor. It depends on Mg(2+) as a cofactor.

It localises to the cytoplasm. It catalyses the reaction Endonucleolytic cleavage to 5'-phosphomonoester.. Its function is as follows. Endonuclease that specifically degrades the RNA of RNA-DNA hybrids. The sequence is that of Ribonuclease HII from Ehrlichia chaffeensis (strain ATCC CRL-10679 / Arkansas).